The chain runs to 159 residues: Ribosomal RNA large subunit methyltransferase H (159 aa).

Residues Ile76, Gly108, and 127–132 (FSKMTF) contribute to the S-adenosyl-L-methionine site.

It belongs to the RNA methyltransferase RlmH family. Homodimer.

It is found in the cytoplasm. The enzyme catalyses pseudouridine(1915) in 23S rRNA + S-adenosyl-L-methionine = N(3)-methylpseudouridine(1915) in 23S rRNA + S-adenosyl-L-homocysteine + H(+). Its function is as follows. Specifically methylates the pseudouridine at position 1915 (m3Psi1915) in 23S rRNA. The sequence is that of Ribosomal RNA large subunit methyltransferase H from Clostridium botulinum (strain Loch Maree / Type A3).